The sequence spans 303 residues: N-acetyl-D-glucosamine kinase (303 aa).

ATP-binding positions include 4–11 (GFDIGGSK) and 133–140 (GVGGGLIV). Residues His157, Cys177, Cys179, and Cys184 each coordinate Zn(2+).

It belongs to the ROK (NagC/XylR) family. NagK subfamily.

The catalysed reaction is N-acetyl-D-glucosamine + ATP = N-acetyl-D-glucosamine 6-phosphate + ADP + H(+). It functions in the pathway cell wall biogenesis; peptidoglycan recycling. Functionally, catalyzes the phosphorylation of N-acetyl-D-glucosamine (GlcNAc) derived from cell-wall degradation, yielding GlcNAc-6-P. This Erwinia tasmaniensis (strain DSM 17950 / CFBP 7177 / CIP 109463 / NCPPB 4357 / Et1/99) protein is N-acetyl-D-glucosamine kinase.